Reading from the N-terminus, the 189-residue chain is MATYSTNEFKSGLKVMLDGDPCSIVENEFVKPGKGQAFNRVKMKNLKSGRVWERTFKSGESLEGADVVDRDMQYLYNDGEFWHFMEPESFEQFQGDASVVGDSAKWLNEQDTVVVTLYNGSPLAVTPPNHVELEIVETDPGLKGDTAQGGTKPATLSTGAVVKVPLFLSTGETVRVDTRTGEYLGRANK.

N6-(3,6-diaminohexanoyl)-5-hydroxylysine is present on K34.

It belongs to the elongation factor P family. In terms of processing, may be beta-lysylated on the epsilon-amino group of Lys-34 by the combined action of EpmA and EpmB, and then hydroxylated on the C5 position of the same residue by EpmC (if this protein is present). Lysylation is critical for the stimulatory effect of EF-P on peptide-bond formation. The lysylation moiety may extend toward the peptidyltransferase center and stabilize the terminal 3-CCA end of the tRNA. Hydroxylation of the C5 position on Lys-34 may allow additional potential stabilizing hydrogen-bond interactions with the P-tRNA.

The protein localises to the cytoplasm. The protein operates within protein biosynthesis; polypeptide chain elongation. In terms of biological role, involved in peptide bond synthesis. Alleviates ribosome stalling that occurs when 3 or more consecutive Pro residues or the sequence PPG is present in a protein, possibly by augmenting the peptidyl transferase activity of the ribosome. Modification of Lys-34 is required for alleviation. The sequence is that of Elongation factor P from Teredinibacter turnerae (strain ATCC 39867 / T7901).